The chain runs to 142 residues: Peptide methionine sulfoxide reductase MsrB (142 aa).

The 124-residue stretch at 2–125 (IKKNKNDLNE…NSAAVQFIPY (124 aa)) folds into the MsrB domain. Cysteine 114 serves as the catalytic Nucleophile.

This sequence belongs to the MsrB Met sulfoxide reductase family.

It catalyses the reaction L-methionyl-[protein] + [thioredoxin]-disulfide + H2O = L-methionyl-(R)-S-oxide-[protein] + [thioredoxin]-dithiol. The polypeptide is Peptide methionine sulfoxide reductase MsrB (Staphylococcus saprophyticus subsp. saprophyticus (strain ATCC 15305 / DSM 20229 / NCIMB 8711 / NCTC 7292 / S-41)).